Consider the following 57-residue polypeptide: Large ribosomal subunit protein uL30 (57 aa).

Belongs to the universal ribosomal protein uL30 family. In terms of assembly, part of the 50S ribosomal subunit.

The protein is Large ribosomal subunit protein uL30 of Clostridium acetobutylicum (strain ATCC 824 / DSM 792 / JCM 1419 / IAM 19013 / LMG 5710 / NBRC 13948 / NRRL B-527 / VKM B-1787 / 2291 / W).